A 554-amino-acid polypeptide reads, in one-letter code: Eukaryotic translation initiation factor 3 subunit D-2 (554 aa).

The interval 291–305 is RNA gate; sequence QFDLLTVNETALEPP. The tract at residues 530–554 is disordered; sequence NAFDSDGNEDEETSEDRPFLKSMAN.

Belongs to the eIF-3 subunit D family. As to quaternary structure, component of the eukaryotic translation initiation factor 3 (eIF-3) complex. The eIF-3 complex interacts with pix.

Its subcellular location is the cytoplasm. In terms of biological role, mRNA cap-binding component of the eukaryotic translation initiation factor 3 (eIF-3) complex, which is involved in protein synthesis of a specialized repertoire of mRNAs and, together with other initiation factors, stimulates binding of mRNA and methionyl-tRNAi to the 40S ribosome. The eIF-3 complex specifically targets and initiates translation of a subset of mRNAs involved in cell proliferation. In the eIF-3 complex, eif3d specifically recognizes and binds the 7-methylguanosine cap of a subset of mRNAs. This is Eukaryotic translation initiation factor 3 subunit D-2 from Drosophila mojavensis (Fruit fly).